The following is a 576-amino-acid chain: Proton pump-interactor 3B (576 aa).

The tract at residues 34–63 (SEVTTDEEEDTIFSGGDSSSGLAAEEDSSG) is disordered. Coiled-coil stretches lie at residues 132-155 (RMVI…LRCT) and 205-241 (EKEA…SDKL). Positions 369-381 (RSEKVHKMNREDS) are enriched in basic and acidic residues. The disordered stretch occupies residues 369–395 (RSEKVHKMNREDSSSNSSEDGNVITDK). A coiled-coil region spans residues 411 to 467 (KKKEEEIDEEALKERKREEQLEKARLVMERKRKLQEKAAAKAAIRAQKEAEKKLKAI). A helical transmembrane segment spans residues 555–575 (WVWGLSSAALAVSLVLVVLLL).

Belongs to the plant Proton pump-interactor protein family.

The protein resides in the cell membrane. It localises to the endoplasmic reticulum membrane. May regulate plasma membrane ATPase activity. In Arabidopsis thaliana (Mouse-ear cress), this protein is Proton pump-interactor 3B (PPI3B).